The sequence spans 216 residues: Large ribosomal subunit protein uL3 (216 aa).

The tract at residues 137–158 (GASHGAHKNHRKPGSIGGASTP) is disordered.

The protein belongs to the universal ribosomal protein uL3 family. In terms of assembly, part of the 50S ribosomal subunit. Forms a cluster with proteins L14 and L19.

One of the primary rRNA binding proteins, it binds directly near the 3'-end of the 23S rRNA, where it nucleates assembly of the 50S subunit. The sequence is that of Large ribosomal subunit protein uL3 from Pseudarthrobacter chlorophenolicus (strain ATCC 700700 / DSM 12829 / CIP 107037 / JCM 12360 / KCTC 9906 / NCIMB 13794 / A6) (Arthrobacter chlorophenolicus).